The following is a 378-amino-acid chain: Pseudouridine kinase (378 aa).

Pseudouridine contacts are provided by residues Asp12, Thr26, 37 to 41 (GVARN), Val38, Asn137, and Lys166. Mg(2+)-binding residues include Ser181 and Thr237. Thr237, Gly239, Gly242, Thr298, Leu306, and Gly310 together coordinate ATP. Asp311 provides a ligand contact to pseudouridine.

Belongs to the carbohydrate kinase PfkB family. Forms homodimers.

The protein resides in the peroxisome. The enzyme catalyses pseudouridine + ATP = psi-UMP + ADP + H(+). Functionally, catalyzes the phosphorylation of pseudouridine to pseudouridine 5'-phosphate (PsiMP). Catalyzes the first step in a pseudouridine degradation pathway. Acts together with the pseudouridine 5'-phosphate glycosidase PUMY in the peroxisome to prevent toxic pseudouridine monophosphate accumulation. The protein is Pseudouridine kinase of Arabidopsis thaliana (Mouse-ear cress).